Here is a 507-residue protein sequence, read N- to C-terminus: Cytochrome P450 71D2 (507 aa).

2 helical membrane passes run leucine 6–glycine 26 and isoleucine 447–tyrosine 467. Cysteine 448 contacts heme.

The protein belongs to the cytochrome P450 family.

The protein localises to the membrane. The sequence is that of Cytochrome P450 71D2 from Catharanthus roseus (Madagascar periwinkle).